A 60-amino-acid chain; its full sequence is uncharacterized protein (60 aa).

A signal peptide spans 1–21; it reads MNKLLKLFFITIIIYNNIAFA.

This is an uncharacterized protein from Rickettsia prowazekii (strain Madrid E).